Reading from the N-terminus, the 456-residue chain is RuvB-like 1 (456 aa).

Positions 1-20 (MKIEEVKSTTKTQRIASHSH) are disordered. 70 to 77 (GPPGTGKT) is a binding site for ATP.

This sequence belongs to the RuvB family. Forms homohexameric rings. Can form a dodecamer with ruvbl2 made of two stacked hexameric rings. Is a component of the RNA polymerase II holoenzyme complex. Component of the chromatin-remodeling Ino80 complex. Component of some MLL1/MLL complex.

The protein localises to the nucleus. It localises to the dynein axonemal particle. It catalyses the reaction ATP + H2O = ADP + phosphate + H(+). Its function is as follows. Has single-stranded DNA-stimulated ATPase and ATP-dependent DNA helicase (3' to 5') activity suggesting a role in nuclear processes such as recombination and transcription. Proposed core component of the chromatin remodeling Ino80 complex which exhibits DNA- and nucleosome-activated ATPase activity and catalyzes ATP-dependent nucleosome sliding. May act as a negative regulator of embryonic heart growth. The chain is RuvB-like 1 (ruvbl1) from Danio rerio (Zebrafish).